The primary structure comprises 78 residues: U29-theraphotoxin-Cg1a (78 aa).

The first 19 residues, 1–19 (MRYQTVFWILLIALCTVNP), serve as a signal peptide directing secretion. 4 disulfide bridges follow: Cys42–Cys56, Cys49–Cys60, Cys55–Cys77, and Cys67–Cys73.

It belongs to the neurotoxin 13 (insecticidal toxin ABC) family. 03 (JZTX-59) subfamily. Expressed by the venom gland.

The protein resides in the secreted. Its function is as follows. Probable ion channel inhibitor. This Chilobrachys guangxiensis (Chinese earth tiger tarantula) protein is U29-theraphotoxin-Cg1a.